The sequence spans 835 residues: Leucine--tRNA ligase (835 aa).

Positions 36–46 match the 'HIGH' region motif; it reads PYPSGKIHVGH. Positions 602 to 606 match the 'KMSKS' region motif; sequence KMSKS. ATP is bound at residue lysine 605.

This sequence belongs to the class-I aminoacyl-tRNA synthetase family.

The protein resides in the cytoplasm. The catalysed reaction is tRNA(Leu) + L-leucine + ATP = L-leucyl-tRNA(Leu) + AMP + diphosphate. The protein is Leucine--tRNA ligase of Rickettsia rickettsii (strain Iowa).